The following is a 238-amino-acid chain: Accessory gene regulator A (238 aa).

A Response regulatory domain is found at 2–125 (KIFICEDDPK…LRTRIIDCLE (124 aa)). Asp-59 carries the 4-aspartylphosphate modification. The 96-residue stretch at 143–238 (IELKRGSNSV…YASVRNVKKK (96 aa)) folds into the HTH LytTR-type domain.

The protein localises to the cytoplasm. In terms of biological role, required for high-level post-exponential phase expression of a series of secreted proteins. The sequence is that of Accessory gene regulator A (agrA) from Staphylococcus aureus (strain Mu50 / ATCC 700699).